Here is a 427-residue protein sequence, read N- to C-terminus: Adenylosuccinate synthetase (427 aa).

GTP is bound by residues 12-18 and 40-42; these read GDEGKGK and GHT. The active-site Proton acceptor is aspartate 13. Mg(2+) is bound by residues aspartate 13 and glycine 40. IMP contacts are provided by residues 13-16, 38-41, threonine 130, arginine 144, glutamine 224, threonine 239, and arginine 303; these read DEGK and NAGH. The Proton donor role is filled by histidine 41. Position 299–305 (299–305) interacts with substrate; the sequence is VTTGRAR. GTP-binding positions include arginine 305, 331-333, and 413-415; these read KID and SVG.

It belongs to the adenylosuccinate synthetase family. In terms of assembly, homodimer. The cofactor is Mg(2+).

Its subcellular location is the cytoplasm. The enzyme catalyses IMP + L-aspartate + GTP = N(6)-(1,2-dicarboxyethyl)-AMP + GDP + phosphate + 2 H(+). It participates in purine metabolism; AMP biosynthesis via de novo pathway; AMP from IMP: step 1/2. Functionally, plays an important role in the de novo pathway of purine nucleotide biosynthesis. Catalyzes the first committed step in the biosynthesis of AMP from IMP. The polypeptide is Adenylosuccinate synthetase (Clostridium novyi (strain NT)).